We begin with the raw amino-acid sequence, 91 residues long: Elongation factor 1-beta (91 aa).

Belongs to the EF-1-beta/EF-1-delta family.

Its function is as follows. Promotes the exchange of GDP for GTP in EF-1-alpha/GDP, thus allowing the regeneration of EF-1-alpha/GTP that could then be used to form the ternary complex EF-1-alpha/GTP/AAtRNA. The protein is Elongation factor 1-beta of Thermococcus kodakarensis (strain ATCC BAA-918 / JCM 12380 / KOD1) (Pyrococcus kodakaraensis (strain KOD1)).